Consider the following 248-residue polypeptide: Protein STPG4 (248 aa).

As to quaternary structure, interacts with histone H3. Interacts with histone H4.

It localises to the cytoplasm. Its subcellular location is the nucleus. In terms of biological role, maternal factor that plays a role in epigenetic chromatin reprogramming during early development of the zygote. Involved in the regulation of gametic DNA demethylation by inducing the conversion of the modified genomic base 5-methylcytosine (5mC) into 5-hydroxymethylcytosine (5hmC). This Homo sapiens (Human) protein is Protein STPG4.